The sequence spans 118 residues: Small ribosomal subunit protein bS6 (118 aa).

The protein belongs to the bacterial ribosomal protein bS6 family.

Binds together with bS18 to 16S ribosomal RNA. The chain is Small ribosomal subunit protein bS6 from Parabacteroides distasonis (strain ATCC 8503 / DSM 20701 / CIP 104284 / JCM 5825 / NCTC 11152).